The following is a 463-amino-acid chain: tRNA-2-methylthio-N(6)-dimethylallyladenosine synthase (463 aa).

An MTTase N-terminal domain is found at 19–135; that stretch reads GSYWITTFGC…LESLLNQVDS (117 aa). Residues cysteine 28, cysteine 64, cysteine 98, cysteine 170, cysteine 174, and cysteine 177 each coordinate [4Fe-4S] cluster. Residues 156-393 form the Radical SAM core domain; the sequence is RDSSFCGWVN…NSLVENIAKE (238 aa). Positions 396-463 constitute a TRAM domain; the sequence is QRYKNTSQEI…RPFSLTAKLL (68 aa).

The protein belongs to the methylthiotransferase family. MiaB subfamily. In terms of assembly, monomer. [4Fe-4S] cluster is required as a cofactor.

The protein resides in the cytoplasm. The catalysed reaction is N(6)-dimethylallyladenosine(37) in tRNA + (sulfur carrier)-SH + AH2 + 2 S-adenosyl-L-methionine = 2-methylsulfanyl-N(6)-dimethylallyladenosine(37) in tRNA + (sulfur carrier)-H + 5'-deoxyadenosine + L-methionine + A + S-adenosyl-L-homocysteine + 2 H(+). Functionally, catalyzes the methylthiolation of N6-(dimethylallyl)adenosine (i(6)A), leading to the formation of 2-methylthio-N6-(dimethylallyl)adenosine (ms(2)i(6)A) at position 37 in tRNAs that read codons beginning with uridine. The sequence is that of tRNA-2-methylthio-N(6)-dimethylallyladenosine synthase from Prochlorococcus marinus (strain NATL1A).